Reading from the N-terminus, the 250-residue chain is Diphthine synthase (250 aa).

S-adenosyl-L-methionine is bound by residues Leu-9, Asp-85, Val-88, 113–114, Leu-165, Ala-202, and His-227; that span reads SI.

This sequence belongs to the diphthine synthase family. As to quaternary structure, homodimer.

It catalyses the reaction 2-[(3S)-amino-3-carboxypropyl]-L-histidyl-[translation elongation factor 2] + 3 S-adenosyl-L-methionine = diphthine-[translation elongation factor 2] + 3 S-adenosyl-L-homocysteine + 3 H(+). Its pathway is protein modification; peptidyl-diphthamide biosynthesis. Its function is as follows. S-adenosyl-L-methionine-dependent methyltransferase that catalyzes the trimethylation of the amino group of the modified target histidine residue in translation elongation factor 2 (EF-2), to form an intermediate called diphthine. The three successive methylation reactions represent the second step of diphthamide biosynthesis. This Methanoregula boonei (strain DSM 21154 / JCM 14090 / 6A8) protein is Diphthine synthase.